We begin with the raw amino-acid sequence, 371 residues long: DNA replication and repair protein RecF (371 aa).

Gly-30–Thr-37 provides a ligand contact to ATP.

Belongs to the RecF family.

The protein localises to the cytoplasm. In terms of biological role, the RecF protein is involved in DNA metabolism; it is required for DNA replication and normal SOS inducibility. RecF binds preferentially to single-stranded, linear DNA. It also seems to bind ATP. The polypeptide is DNA replication and repair protein RecF (Staphylococcus epidermidis (strain ATCC 12228 / FDA PCI 1200)).